Consider the following 169-residue polypeptide: Crossover junction endodeoxyribonuclease RuvC (169 aa).

Active-site residues include Asp7, Glu67, and Asp140. 3 residues coordinate Mg(2+): Asp7, Glu67, and Asp140.

The protein belongs to the RuvC family. As to quaternary structure, homodimer which binds Holliday junction (HJ) DNA. The HJ becomes 2-fold symmetrical on binding to RuvC with unstacked arms; it has a different conformation from HJ DNA in complex with RuvA. In the full resolvosome a probable DNA-RuvA(4)-RuvB(12)-RuvC(2) complex forms which resolves the HJ. Requires Mg(2+) as cofactor.

It is found in the cytoplasm. The enzyme catalyses Endonucleolytic cleavage at a junction such as a reciprocal single-stranded crossover between two homologous DNA duplexes (Holliday junction).. Functionally, the RuvA-RuvB-RuvC complex processes Holliday junction (HJ) DNA during genetic recombination and DNA repair. Endonuclease that resolves HJ intermediates. Cleaves cruciform DNA by making single-stranded nicks across the HJ at symmetrical positions within the homologous arms, yielding a 5'-phosphate and a 3'-hydroxyl group; requires a central core of homology in the junction. The consensus cleavage sequence is 5'-(A/T)TT(C/G)-3'. Cleavage occurs on the 3'-side of the TT dinucleotide at the point of strand exchange. HJ branch migration catalyzed by RuvA-RuvB allows RuvC to scan DNA until it finds its consensus sequence, where it cleaves and resolves the cruciform DNA. The chain is Crossover junction endodeoxyribonuclease RuvC from Clostridioides difficile (strain 630) (Peptoclostridium difficile).